We begin with the raw amino-acid sequence, 677 residues long: Methionine--tRNA ligase (677 aa).

Positions P15–H25 match the 'HIGH' region motif. The Zn(2+) site is built by C146, C149, C159, and C162. The short motif at K333 to S337 is the 'KMSKS' region element. K336 is an ATP binding site. The tRNA-binding domain occupies D575 to K677.

The protein belongs to the class-I aminoacyl-tRNA synthetase family. MetG type 1 subfamily. In terms of assembly, homodimer. The cofactor is Zn(2+).

The protein resides in the cytoplasm. It carries out the reaction tRNA(Met) + L-methionine + ATP = L-methionyl-tRNA(Met) + AMP + diphosphate. Functionally, is required not only for elongation of protein synthesis but also for the initiation of all mRNA translation through initiator tRNA(fMet) aminoacylation. This is Methionine--tRNA ligase from Citrobacter koseri (strain ATCC BAA-895 / CDC 4225-83 / SGSC4696).